The primary structure comprises 378 residues: Non-functional pseudokinase ZRK6 (378 aa).

A Protein kinase domain is found at 34-378 (DGKCNPIKNF…SNNRSQMSSI (345 aa)). ATP is bound by residues 40-48 (IKNFSYDQI) and Lys83.

The protein belongs to the protein kinase superfamily. Ser/Thr protein kinase family. ZRK subfamily. Interacts with RPP13L4/ZAR1.

This Arabidopsis thaliana (Mouse-ear cress) protein is Non-functional pseudokinase ZRK6.